The chain runs to 137 residues: Putative nickel-responsive regulator (137 aa).

Residues His-78, His-89, His-91, and Cys-97 each contribute to the Ni(2+) site.

Belongs to the transcriptional regulatory CopG/NikR family. Requires Ni(2+) as cofactor.

In terms of biological role, transcriptional regulator. This is Putative nickel-responsive regulator from Syntrophus aciditrophicus (strain SB).